The chain runs to 121 residues: Small ribosomal subunit protein uS10 (121 aa).

N-acetylserine is present on Ser-2. Glycyl lysine isopeptide (Lys-Gly) (interchain with G-Cter in ubiquitin) cross-links involve residues Lys-6, Lys-8, Lys-21, Lys-32, and Lys-101.

The protein belongs to the universal ribosomal protein uS10 family. Component of the small ribosomal subunit (SSU). Mature yeast ribosomes consist of a small (40S) and a large (60S) subunit. The 40S small subunit contains 1 molecule of ribosomal RNA (18S rRNA) and 33 different proteins (encoded by 57 genes). The large 60S subunit contains 3 rRNA molecules (25S, 5.8S and 5S rRNA) and 46 different proteins (encoded by 81 genes). Post-translationally, ubiquitinated at Lys-6 and Lys-8 by HEL2, to activate the ribosome quality control (RQC) pathway in response to stalled ribosomes. N-terminally acetylated by acetyltransferase NatA. Also partially acetylated by NatC.

It localises to the cytoplasm. Component of the ribosome, a large ribonucleoprotein complex responsible for the synthesis of proteins in the cell. The small ribosomal subunit (SSU) binds messenger RNAs (mRNAs) and translates the encoded message by selecting cognate aminoacyl-transfer RNA (tRNA) molecules. The large subunit (LSU) contains the ribosomal catalytic site termed the peptidyl transferase center (PTC), which catalyzes the formation of peptide bonds, thereby polymerizing the amino acids delivered by tRNAs into a polypeptide chain. The nascent polypeptides leave the ribosome through a tunnel in the LSU and interact with protein factors that function in enzymatic processing, targeting, and the membrane insertion of nascent chains at the exit of the ribosomal tunnel. In Saccharomyces cerevisiae (strain ATCC 204508 / S288c) (Baker's yeast), this protein is Small ribosomal subunit protein uS10.